Reading from the N-terminus, the 361-residue chain is Chorismate synthase (361 aa).

The span at 38 to 49 shows a compositional bias: basic and acidic residues; that stretch reads EKDMQHDLDRRR. The interval 38 to 58 is disordered; that stretch reads EKDMQHDLDRRRPGTSKYTTQ. R48 provides a ligand contact to NADP(+). FMN is bound by residues 125-127, 238-239, G278, 293-297, and R319; these read RSS, NA, and KPTSS.

This sequence belongs to the chorismate synthase family. As to quaternary structure, homotetramer. The cofactor is FMNH2.

The enzyme catalyses 5-O-(1-carboxyvinyl)-3-phosphoshikimate = chorismate + phosphate. The protein operates within metabolic intermediate biosynthesis; chorismate biosynthesis; chorismate from D-erythrose 4-phosphate and phosphoenolpyruvate: step 7/7. In terms of biological role, catalyzes the anti-1,4-elimination of the C-3 phosphate and the C-6 proR hydrogen from 5-enolpyruvylshikimate-3-phosphate (EPSP) to yield chorismate, which is the branch point compound that serves as the starting substrate for the three terminal pathways of aromatic amino acid biosynthesis. This reaction introduces a second double bond into the aromatic ring system. This is Chorismate synthase from Photobacterium profundum (strain SS9).